Reading from the N-terminus, the 595-residue chain is Aspartate--tRNA(Asp/Asn) ligase (595 aa).

Residue Glu-175 participates in L-aspartate binding. The segment at 199-202 (QQYK) is aspartate. Arg-221 and His-454 together coordinate L-aspartate. Position 221-223 (221-223 (RDE)) interacts with ATP. Glu-488 is a binding site for ATP. L-aspartate is bound at residue Arg-495. Residue 540-543 (GIDR) coordinates ATP.

The protein belongs to the class-II aminoacyl-tRNA synthetase family. Type 1 subfamily. As to quaternary structure, homodimer.

The protein localises to the cytoplasm. The catalysed reaction is tRNA(Asx) + L-aspartate + ATP = L-aspartyl-tRNA(Asx) + AMP + diphosphate. Aspartyl-tRNA synthetase with relaxed tRNA specificity since it is able to aspartylate not only its cognate tRNA(Asp) but also tRNA(Asn). Reaction proceeds in two steps: L-aspartate is first activated by ATP to form Asp-AMP and then transferred to the acceptor end of tRNA(Asp/Asn). The protein is Aspartate--tRNA(Asp/Asn) ligase of Brucella anthropi (strain ATCC 49188 / DSM 6882 / CCUG 24695 / JCM 21032 / LMG 3331 / NBRC 15819 / NCTC 12168 / Alc 37) (Ochrobactrum anthropi).